A 39-amino-acid chain; its full sequence is Cytochrome b6-f complex subunit 5 (39 aa).

A helical membrane pass occupies residues 5 to 25 (LLCGIVLGLVPITLLGLFVAA).

The protein belongs to the PetG family. As to quaternary structure, the 4 large subunits of the cytochrome b6-f complex are cytochrome b6, subunit IV (17 kDa polypeptide, PetD), cytochrome f and the Rieske protein, while the 4 small subunits are PetG, PetL, PetM and PetN. The complex functions as a dimer.

The protein resides in the cellular thylakoid membrane. In terms of biological role, component of the cytochrome b6-f complex, which mediates electron transfer between photosystem II (PSII) and photosystem I (PSI), cyclic electron flow around PSI, and state transitions. PetG is required for either the stability or assembly of the cytochrome b6-f complex. The sequence is that of Cytochrome b6-f complex subunit 5 from Prochlorococcus marinus (strain SARG / CCMP1375 / SS120).